A 940-amino-acid chain; its full sequence is Lysine-specific demethylase 7A (940 aa).

The PHD-type zinc finger occupies Pro37–Leu88. Residues Arg97–Pro114 form a linker region. One can recognise a JmjC domain in the interval Phe230–Lys386. Residue Thr279 coordinates substrate. His282 and Asp284 together coordinate Fe cation. Lys299 serves as a coordination point for substrate. His354 contributes to the Fe cation binding site. Disordered regions lie at residues Val483–Arg509, Leu599–Thr670, Ser710–Ser729, Asn818–Ile854, and Ser876–Ala920. Ser604 carries the post-translational modification Phosphoserine. A compositionally biased stretch (polar residues) spans Thr613–Ser623. The span at Ser714–Cys724 shows a compositional bias: basic and acidic residues.

This sequence belongs to the JHDM1 histone demethylase family. JHDM1D subfamily. It depends on Fe(2+) as a cofactor.

It is found in the nucleus. The enzyme catalyses N(6),N(6)-dimethyl-L-lysyl(9)-[histone H3] + 2 2-oxoglutarate + 2 O2 = L-lysyl(9)-[histone H3] + 2 formaldehyde + 2 succinate + 2 CO2. It catalyses the reaction N(6),N(6)-dimethyl-L-lysyl(27)-[histone H3] + 2 2-oxoglutarate + 2 O2 = L-lysyl(27)-[histone H3] + 2 formaldehyde + 2 succinate + 2 CO2. The catalysed reaction is N(6),N(6)-dimethyl-L-lysyl(36)-[histone H3] + 2-oxoglutarate + O2 = N(6)-methyl-L-lysyl(36)-[histone H3] + formaldehyde + succinate + CO2. It carries out the reaction N(6)-methyl-L-lysyl(20)-[histone H4] + 2-oxoglutarate + O2 = L-lysyl(20)-[histone H4] + formaldehyde + succinate + CO2. In terms of biological role, histone demethylase required for brain development. Specifically demethylates dimethylated 'Lys-9', 'Lys-27' and 'Lys-36' (H3K9me2, H3K27me2, H3K36me2, respectively) of histone H3 and monomethylated histone H4 'Lys-20' residue (H4K20Me1), thereby playing a central role in histone code. Specifically binds trimethylated 'Lys-4' of histone H3 (H3K4me3), affecting histone demethylase specificity: in presence of H3K4me3, it has no demethylase activity toward H3K9me2, while it has high activity toward H3K27me2. Demethylates H3K9me2 in absence of H3K4me3. Has activity toward H4K20Me1 only when nucleosome is used as a substrate and when not histone octamer is used as substrate. The protein is Lysine-specific demethylase 7A (Kdm7a) of Mus musculus (Mouse).